The sequence spans 437 residues: MSEVLPLITRRGDRIAFVSGLRTPFARQATAYHGVPAIELGKLVTSELLVRTGIDPELIELLVFGQVVQMPEAPNIAREIVLGTGMSVHTDAYSVSRACATSFQAVANVAESIMAGTVEVGIAGGADSSSVLPIGVSKALARTLVDMNKARTLGQKLRLLSGLRPKDLLPVAPAVAEYSTGLRMGDTAEQMAKTYGITREEQDELAHRSHKLAAQAWESGVLRDEVMTAYVPPYEKALSEDNNVRHDSAIEQYSRLRPAFDRRHGTVTAANSTPLTDGAAAVLMMSESKAKSLGLTPLGYLRSYAFSAIGVQRDMLLGPAYASPLALARAGVALADLTLIDMHEAFAAQTLANLKLFASDEFARNQLGRNAALGEVDRAKFNVLGGSIAYGHPFAATGARMITQTLNELRRRGGGLGLTTACAAGGLGAAMVLEVTP.

Cys99 (acyl-thioester intermediate) is an active-site residue. Active-site proton acceptor residues include His392 and Cys422.

This sequence belongs to the thiolase-like superfamily. Thiolase family. Heterotetramer of two alpha chains (FadJ) and two beta chains (FadI).

The protein localises to the cytoplasm. It carries out the reaction an acyl-CoA + acetyl-CoA = a 3-oxoacyl-CoA + CoA. Its pathway is lipid metabolism; fatty acid beta-oxidation. Catalyzes the final step of fatty acid oxidation in which acetyl-CoA is released and the CoA ester of a fatty acid two carbons shorter is formed. This Pectobacterium atrosepticum (strain SCRI 1043 / ATCC BAA-672) (Erwinia carotovora subsp. atroseptica) protein is 3-ketoacyl-CoA thiolase.